Consider the following 134-residue polypeptide: Small ribosomal subunit protein uS8 (134 aa).

Belongs to the universal ribosomal protein uS8 family. As to quaternary structure, part of the 30S ribosomal subunit. Contacts proteins S5 and S12.

Functionally, one of the primary rRNA binding proteins, it binds directly to 16S rRNA central domain where it helps coordinate assembly of the platform of the 30S subunit. The chain is Small ribosomal subunit protein uS8 from Thermotoga sp. (strain RQ2).